The primary structure comprises 391 residues: Lipid-A-disaccharide synthase (391 aa).

The protein belongs to the LpxB family.

It catalyses the reaction a lipid X + a UDP-2-N,3-O-bis[(3R)-3-hydroxyacyl]-alpha-D-glucosamine = a lipid A disaccharide + UDP + H(+). The protein operates within bacterial outer membrane biogenesis; LPS lipid A biosynthesis. Its function is as follows. Condensation of UDP-2,3-diacylglucosamine and 2,3-diacylglucosamine-1-phosphate to form lipid A disaccharide, a precursor of lipid A, a phosphorylated glycolipid that anchors the lipopolysaccharide to the outer membrane of the cell. This is Lipid-A-disaccharide synthase from Rickettsia akari (strain Hartford).